Consider the following 80-residue polypeptide: RNA-binding protein Hfq (80 aa).

In terms of domain architecture, Sm spans 10 to 70 (DLFLNTVRKQ…ISTIMPGQPL (61 aa)).

The protein belongs to the Hfq family. Homohexamer.

Its function is as follows. RNA chaperone that binds small regulatory RNA (sRNAs) and mRNAs to facilitate mRNA translational regulation in response to envelope stress, environmental stress and changes in metabolite concentrations. Also binds with high specificity to tRNAs. This is RNA-binding protein Hfq from Rhizobium meliloti (strain 1021) (Ensifer meliloti).